A 110-amino-acid chain; its full sequence is Large ribosomal subunit protein uL22 (110 aa).

It belongs to the universal ribosomal protein uL22 family. As to quaternary structure, part of the 50S ribosomal subunit.

In terms of biological role, this protein binds specifically to 23S rRNA; its binding is stimulated by other ribosomal proteins, e.g. L4, L17, and L20. It is important during the early stages of 50S assembly. It makes multiple contacts with different domains of the 23S rRNA in the assembled 50S subunit and ribosome. The globular domain of the protein is located near the polypeptide exit tunnel on the outside of the subunit, while an extended beta-hairpin is found that lines the wall of the exit tunnel in the center of the 70S ribosome. This is Large ribosomal subunit protein uL22 from Exiguobacterium sibiricum (strain DSM 17290 / CCUG 55495 / CIP 109462 / JCM 13490 / 255-15).